A 249-amino-acid chain; its full sequence is 2,3-bisphosphoglycerate-dependent phosphoglycerate mutase (249 aa).

Residues 9–16 (RHGQSQWN), 22–23 (TG), Arg61, 88–91 (ERHY), Lys99, 115–116 (RR), and 184–185 (GN) contribute to the substrate site. His10 (tele-phosphohistidine intermediate) is an active-site residue. The Proton donor/acceptor role is filled by Glu88.

This sequence belongs to the phosphoglycerate mutase family. BPG-dependent PGAM subfamily. In terms of assembly, homodimer.

It carries out the reaction (2R)-2-phosphoglycerate = (2R)-3-phosphoglycerate. It functions in the pathway carbohydrate degradation; glycolysis; pyruvate from D-glyceraldehyde 3-phosphate: step 3/5. Functionally, catalyzes the interconversion of 2-phosphoglycerate and 3-phosphoglycerate. This is 2,3-bisphosphoglycerate-dependent phosphoglycerate mutase from Stenotrophomonas maltophilia (strain K279a).